The chain runs to 159 residues: Kojic acid related protein 6 (159 aa).

Functionally, negatively regulates mycelium growth and conidial formation and is required for stress tolerance. Plays a role in kojic acid synthesis in coordination with kojA, kojR and kojT where it acts upstream of kojA. This chain is Kojic acid related protein 6, found in Aspergillus oryzae (strain ATCC 42149 / RIB 40) (Yellow koji mold).